The primary structure comprises 172 residues: MAEKRNIFLIGPMGAGKSTIGKYLSETLHMDLYDSDQEIERRTGADIAWVFDVEGEEGFRKREEQVISDLSELQGIVLATGGGAIKSPLTRNRLSARGIVVYLETPIEKQLARTQRDKRRPLLRTEEPPREVLTRLADEREPLYREIADYVVRTDELTAKQVATQIVELLGL.

An ATP-binding site is contributed by 14–19 (GAGKST). Residue Ser-18 coordinates Mg(2+). Residues Asp-36, Arg-60, and Gly-82 each coordinate substrate. An ATP-binding site is contributed by Arg-120. Substrate is bound at residue Arg-140.

It belongs to the shikimate kinase family. As to quaternary structure, monomer. It depends on Mg(2+) as a cofactor.

It localises to the cytoplasm. The enzyme catalyses shikimate + ATP = 3-phosphoshikimate + ADP + H(+). Its pathway is metabolic intermediate biosynthesis; chorismate biosynthesis; chorismate from D-erythrose 4-phosphate and phosphoenolpyruvate: step 5/7. Catalyzes the specific phosphorylation of the 3-hydroxyl group of shikimic acid using ATP as a cosubstrate. The protein is Shikimate kinase of Tolumonas auensis (strain DSM 9187 / NBRC 110442 / TA 4).